The chain runs to 343 residues: Endoglucanase C (343 aa).

Residue glutamate 140 is the Proton donor of the active site. The Nucleophile role is filled by glutamate 280.

Belongs to the glycosyl hydrolase 5 (cellulase A) family.

It catalyses the reaction Endohydrolysis of (1-&gt;4)-beta-D-glucosidic linkages in cellulose, lichenin and cereal beta-D-glucans.. Its pathway is glycan metabolism; cellulose degradation. Its function is as follows. This enzyme catalyzes the endohydrolysis of 1,4-beta-glucosidic linkages in cellulose, lichenin and cereal beta-D-glucans. In Acetivibrio thermocellus (strain ATCC 27405 / DSM 1237 / JCM 9322 / NBRC 103400 / NCIMB 10682 / NRRL B-4536 / VPI 7372) (Clostridium thermocellum), this protein is Endoglucanase C (celC).